Consider the following 440-residue polypeptide: L-seryl-tRNA(Sec) selenium transferase (440 aa).

Position 282 is an N6-(pyridoxal phosphate)lysine (Lys282).

This sequence belongs to the SelA family. Pyridoxal 5'-phosphate serves as cofactor.

It is found in the cytoplasm. It catalyses the reaction L-seryl-tRNA(Sec) + selenophosphate + H(+) = L-selenocysteinyl-tRNA(Sec) + phosphate. Its pathway is aminoacyl-tRNA biosynthesis; selenocysteinyl-tRNA(Sec) biosynthesis; selenocysteinyl-tRNA(Sec) from L-seryl-tRNA(Sec) (bacterial route): step 1/1. In terms of biological role, converts seryl-tRNA(Sec) to selenocysteinyl-tRNA(Sec) required for selenoprotein biosynthesis. This is L-seryl-tRNA(Sec) selenium transferase from Campylobacter jejuni (strain RM1221).